Here is a 134-residue protein sequence, read N- to C-terminus: Putative pre-16S rRNA nuclease (134 aa).

Belongs to the YqgF nuclease family.

It localises to the cytoplasm. Its function is as follows. Could be a nuclease involved in processing of the 5'-end of pre-16S rRNA. The polypeptide is Putative pre-16S rRNA nuclease (Helicobacter pylori (strain G27)).